Consider the following 490-residue polypeptide: Hippocampus abundant transcript 1 protein (490 aa).

Methionine 1 carries the post-translational modification N-acetylmethionine. Topologically, residues 1–40 (MTQGKKKKRAANRSIMLAKKIIIKDGGTPQGIGSPSVYHA) are extracellular. Asparagine 12 is a glycosylation site (N-linked (GlcNAc...) asparagine). A helical membrane pass occupies residues 41 to 61 (VIVIFLEFFAWGLLTAPTLVV). The Cytoplasmic segment spans residues 62 to 74 (LHETFPKHTFLMN). The helical transmembrane segment at 75-95 (GLIQGVKGLLSFLSAPLIGAL) threads the bilayer. The Extracellular segment spans residues 96–103 (SDVWGRKS). The helical transmembrane segment at 104 to 124 (FLLLTVFFTCAPIPLMKISPW) threads the bilayer. Residues 125-126 (WY) are Cytoplasmic-facing. A helical membrane pass occupies residues 127 to 147 (FAVISVSGVFAVTFSVVFAYV). Topologically, residues 148–160 (ADITQEHERSMAY) are extracellular. A helical membrane pass occupies residues 161-181 (GLVSATFAASLVTSPAIGAYL). Residues 182–188 (GRVYGDS) are Cytoplasmic-facing. A helical transmembrane segment spans residues 189 to 209 (LVVVLATAIALLDICFILVAV). Over 210–243 (PESLPEKMRPASWGAPISWEQADPFASLKKVGQD) the chain is Extracellular. The helical transmembrane segment at 244 to 264 (SIVLLICITVFLSYLPEAGQY) threads the bilayer. Residues 265 to 284 (SSFFLYLRQIMKFSPESVAA) are Cytoplasmic-facing. Residues 285 to 305 (FIAVLGILSIIAQTIVLSLLM) form a helical membrane-spanning segment. Topologically, residues 306-313 (RSIGNKNT) are extracellular. A helical membrane pass occupies residues 314 to 334 (ILLGLGFQILQLAWYGFGSEP). The Cytoplasmic portion of the chain corresponds to 335 to 337 (WMM). The helical transmembrane segment at 338–358 (WAAGAVAAMSSITFPAVSALV) threads the bilayer. Topologically, residues 359–379 (SRTADADQQGVVQGMITGIRG) are extracellular. A helical transmembrane segment spans residues 380 to 400 (LCNGLGPALYGFIFYIFHVEL). Residues 401–427 (KELPITGTDLGTNTSPQHHFEQNSIIP) lie on the Cytoplasmic side of the membrane. Residues 428–448 (GPPFLFGACSVLLALLVALFI) traverse the membrane as a helical segment. The Extracellular portion of the chain corresponds to 449–490 (PEHTNLSLRSSSWRKHCGSHSHPHNTQAPGEAKEPLLQDTNV). Asparagine 453 carries N-linked (GlcNAc...) asparagine glycosylation. The tract at residues 465–490 (CGSHSHPHNTQAPGEAKEPLLQDTNV) is disordered.

The protein belongs to the major facilitator superfamily.

It is found in the membrane. The sequence is that of Hippocampus abundant transcript 1 protein from Homo sapiens (Human).